The chain runs to 447 residues: Ribosomal protein uS12 methylthiotransferase RimO (447 aa).

The MTTase N-terminal domain occupies 15–125; that stretch reads PRVGFVSLGC…VMQAIHRHLP (111 aa). Residues Cys-24, Cys-60, Cys-89, Cys-156, Cys-160, and Cys-163 each coordinate [4Fe-4S] cluster. A Radical SAM core domain is found at 142–379; sequence LTPKHYAYLK…MQWQEEISKK (238 aa). Positions 379-447 constitute a TRAM domain; it reads KRLAGKKGRI…GIHDLWAKKI (69 aa).

It belongs to the methylthiotransferase family. RimO subfamily. [4Fe-4S] cluster is required as a cofactor.

The protein localises to the cytoplasm. The catalysed reaction is L-aspartate(89)-[ribosomal protein uS12]-hydrogen + (sulfur carrier)-SH + AH2 + 2 S-adenosyl-L-methionine = 3-methylsulfanyl-L-aspartate(89)-[ribosomal protein uS12]-hydrogen + (sulfur carrier)-H + 5'-deoxyadenosine + L-methionine + A + S-adenosyl-L-homocysteine + 2 H(+). In terms of biological role, catalyzes the methylthiolation of an aspartic acid residue of ribosomal protein uS12. In Nitrosomonas europaea (strain ATCC 19718 / CIP 103999 / KCTC 2705 / NBRC 14298), this protein is Ribosomal protein uS12 methylthiotransferase RimO.